The primary structure comprises 124 residues: Small ribosomal subunit protein bS6 (124 aa).

A disordered region spans residues 96–124 (ETGPSPMMKEVQREEAKKAAAAQPAEAQA). Low complexity predominate over residues 114–124 (AAAAQPAEAQA).

The protein belongs to the bacterial ribosomal protein bS6 family.

Functionally, binds together with bS18 to 16S ribosomal RNA. This chain is Small ribosomal subunit protein bS6, found in Burkholderia orbicola (strain AU 1054).